Here is a 276-residue protein sequence, read N- to C-terminus: Small ribosomal subunit protein uS2 (276 aa).

The interval 226–276 is disordered; that stretch reads KKAREERQLAAAREAAGEPKSEDAPAEAAATEEAPATEAPAAEAQQENAAE. A compositionally biased stretch (low complexity) spans 251 to 276; sequence AEAAATEEAPATEAPAAEAQQENAAE.

This sequence belongs to the universal ribosomal protein uS2 family.

In Corynebacterium efficiens (strain DSM 44549 / YS-314 / AJ 12310 / JCM 11189 / NBRC 100395), this protein is Small ribosomal subunit protein uS2.